Here is a 235-residue protein sequence, read N- to C-terminus: Sugar fermentation stimulation protein homolog (235 aa).

This sequence belongs to the SfsA family.

The protein is Sugar fermentation stimulation protein homolog of Aliivibrio fischeri (strain ATCC 700601 / ES114) (Vibrio fischeri).